A 140-amino-acid polypeptide reads, in one-letter code: Large ribosomal subunit protein uL11 (140 aa).

It belongs to the universal ribosomal protein uL11 family. Part of the ribosomal stalk of the 50S ribosomal subunit. Interacts with L10 and the large rRNA to form the base of the stalk. L10 forms an elongated spine to which L12 dimers bind in a sequential fashion forming a multimeric L10(L12)X complex. In terms of processing, one or more lysine residues are methylated.

Forms part of the ribosomal stalk which helps the ribosome interact with GTP-bound translation factors. The polypeptide is Large ribosomal subunit protein uL11 (Karelsulcia muelleri (strain GWSS) (Sulcia muelleri)).